A 498-amino-acid chain; its full sequence is ATP synthase subunit beta, chloroplastic (498 aa).

G172 to T179 is a binding site for ATP.

The protein belongs to the ATPase alpha/beta chains family. As to quaternary structure, F-type ATPases have 2 components, CF(1) - the catalytic core - and CF(0) - the membrane proton channel. CF(1) has five subunits: alpha(3), beta(3), gamma(1), delta(1), epsilon(1). CF(0) has four main subunits: a(1), b(1), b'(1) and c(9-12).

It is found in the plastid. The protein resides in the chloroplast thylakoid membrane. The enzyme catalyses ATP + H2O + 4 H(+)(in) = ADP + phosphate + 5 H(+)(out). Functionally, produces ATP from ADP in the presence of a proton gradient across the membrane. The catalytic sites are hosted primarily by the beta subunits. This is ATP synthase subunit beta, chloroplastic from Coffea arabica (Arabian coffee).